The sequence spans 176 residues: Probable superoxide oxidase CybB (176 aa).

The next 4 membrane-spanning stretches (helical) occupy residues 7-27 (CLQIGIHWLVLLLVIIAWSSI), 44-64 (IHFSCGIAILVLMMTRILIQL), 85-105 (VGHWVIYLLFIALPIIGIAIL), and 137-157 (HLLLANMSYFVIGLHALAALL). The heme b site is built by histidine 13 and histidine 45. Heme b-binding residues include histidine 137 and histidine 151.

Belongs to the cytochrome b561 family. Heme b serves as cofactor.

The protein resides in the cell inner membrane. It carries out the reaction a ubiquinol + 2 O2 = 2 superoxide + a ubiquinone + 2 H(+). B-type di-heme cytochrome. Catalyzes the oxidation of superoxide to molecular oxygen and transfers the extracted electrons to ubiquinone through the two hemes. The chain is Probable superoxide oxidase CybB (cybB) from Yersinia pestis.